The chain runs to 153 residues: Endoribonuclease YbeY (153 aa).

The Zn(2+) site is built by His-114, His-118, and His-124.

This sequence belongs to the endoribonuclease YbeY family. Zn(2+) serves as cofactor.

The protein localises to the cytoplasm. In terms of biological role, single strand-specific metallo-endoribonuclease involved in late-stage 70S ribosome quality control and in maturation of the 3' terminus of the 16S rRNA. This is Endoribonuclease YbeY from Shewanella baltica (strain OS195).